The chain runs to 86 residues: Large ribosomal subunit protein bL31B (86 aa).

It belongs to the bacterial ribosomal protein bL31 family. Type B subfamily. As to quaternary structure, part of the 50S ribosomal subunit.

The sequence is that of Large ribosomal subunit protein bL31B from Salmonella paratyphi A (strain ATCC 9150 / SARB42).